We begin with the raw amino-acid sequence, 120 residues long: NAD(P)H-quinone oxidoreductase subunit 3, chloroplastic (120 aa).

3 helical membrane-spanning segments follow: residues 9-29, 64-84, and 88-108; these read IFWA…FVSG, MFAL…PWAM, and VLGI…IVGL.

This sequence belongs to the complex I subunit 3 family. NDH is composed of at least 16 different subunits, 5 of which are encoded in the nucleus.

It is found in the plastid. The protein localises to the chloroplast thylakoid membrane. The catalysed reaction is a plastoquinone + NADH + (n+1) H(+)(in) = a plastoquinol + NAD(+) + n H(+)(out). It catalyses the reaction a plastoquinone + NADPH + (n+1) H(+)(in) = a plastoquinol + NADP(+) + n H(+)(out). NDH shuttles electrons from NAD(P)H:plastoquinone, via FMN and iron-sulfur (Fe-S) centers, to quinones in the photosynthetic chain and possibly in a chloroplast respiratory chain. The immediate electron acceptor for the enzyme in this species is believed to be plastoquinone. Couples the redox reaction to proton translocation, and thus conserves the redox energy in a proton gradient. This Daucus carota (Wild carrot) protein is NAD(P)H-quinone oxidoreductase subunit 3, chloroplastic.